Here is a 677-residue protein sequence, read N- to C-terminus: Regulator of G-protein signaling 9 (677 aa).

Residues 30–105 (PETGVRMQNQ…PDSSLYRFQT (76 aa)) enclose the DEP domain. Residues 219–280 (VTAVRKEIMY…ITDDTQFWDL (62 aa)) enclose the G protein gamma domain. Residues 295-416 (RWAFNFSELI…SPIYKEMLAK (122 aa)) enclose the RGS domain. 2 disordered regions span residues 530–571 (SSGL…RAPL) and 639–677 (DSGPCLMDSDDPGAGESGDQTTEKEVICPWESLAEGKAG).

As to quaternary structure, heterodimer with GNB5. Interacts with RGS7BP, leading to regulate the subcellular location of the heterodimer formed with GNB5. Component of the RGS9-1-Gbeta5 complex composed of RGS9 (RGS9-1), Gbeta5 (GNB5) and RGS9BP. Interacts with PDE6G and GNAT1. In terms of tissue distribution, expressed in the central nervous system. Isoform RGS9L is found in striatum, hypothalamus and nucleus accumbens while isoform RGS9S is expressed in retina and pineal gland.

Its subcellular location is the membrane. Inhibits signal transduction by increasing the GTPase activity of G protein alpha subunits thereby driving them into their inactive GDP-bound form. Binds to GNAT1. Involved in phototransduction; key element in the recovery phase of visual transduction. The sequence is that of Regulator of G-protein signaling 9 (Rgs9) from Rattus norvegicus (Rat).